The chain runs to 257 residues: Gamma-secretase subunit APH-1B (257 aa).

Transmembrane regions (helical) follow at residues 5–25 (VFFG…VFTI), 32–52 (IIFL…SSLV), 70–90 (YLLI…RFAY), 115–135 (LLAY…SFVN), 158–178 (YSAF…IVFF), 186–206 (WGIL…TFIS), and 213–233 (LASA…AAGG).

The protein belongs to the APH-1 family. As to quaternary structure, probable component of the gamma-secretase complex, a complex composed of a presenilin homodimer (PSEN1 or PSEN2), nicastrin (NCSTN), APH1 (APH1A or APH1B) and PEN2. Such minimal complex is sufficient for secretase activity, although other components may exist. Interacts with PSEN1 and PSEN2.

It localises to the membrane. Probable subunit of the gamma-secretase complex, an endoprotease complex that catalyzes the intramembrane cleavage of integral proteins such as Notch receptors and APP (amyloid-beta precursor protein). It probably represents a stabilizing cofactor for the presenilin homodimer that promotes the formation of a stable complex. Probably present in a minority of gamma-secretase complexes compared to APH1A. The sequence is that of Gamma-secretase subunit APH-1B (APH1B) from Pongo abelii (Sumatran orangutan).